Reading from the N-terminus, the 485-residue chain is Zinc finger protein 639 (485 aa).

Residues 1–14 (MSEYPKKRKRKTLH) show a composition bias toward basic residues. 2 disordered regions span residues 1–23 (MSEY…DSSG) and 54–82 (DNKD…SRSQ). Phosphoserine is present on Ser-60. Lys-76 participates in a covalent cross-link: Glycyl lysine isopeptide (Lys-Gly) (interchain with G-Cter in SUMO2). Phosphoserine is present on Ser-88. Glycyl lysine isopeptide (Lys-Gly) (interchain with G-Cter in SUMO2) cross-links involve residues Lys-177, Lys-181, and Lys-226. 8 C2H2-type zinc fingers span residues 204-227 (YKCE…ILKH), 233-255 (NVCR…AKLH), 260-283 (YICK…ADTH), 289-311 (YWCE…FQEH), 374-397 (FVCQ…AIEH), 403-425 (HVCD…LNSH), 431-454 (YLCQ…DFKH), and 460-482 (HKCS…LPVH). Residues 371–455 (KNFFVCQVCG…LKIHLDFKHS (85 aa)) are interaction with CTNNA2.

It belongs to the krueppel C2H2-type zinc-finger protein family. In terms of assembly, interacts with CTNNA2.

The protein resides in the nucleus. Functionally, binds DNA and may function as a transcriptional repressor. The protein is Zinc finger protein 639 (Znf639) of Rattus norvegicus (Rat).